We begin with the raw amino-acid sequence, 112 residues long: Peptidyl-tRNA hydrolase (112 aa).

It belongs to the PTH2 family.

It is found in the cytoplasm. It carries out the reaction an N-acyl-L-alpha-aminoacyl-tRNA + H2O = an N-acyl-L-amino acid + a tRNA + H(+). Its function is as follows. The natural substrate for this enzyme may be peptidyl-tRNAs which drop off the ribosome during protein synthesis. The polypeptide is Peptidyl-tRNA hydrolase (Haloquadratum walsbyi (strain DSM 16790 / HBSQ001)).